We begin with the raw amino-acid sequence, 69 residues long: Guanine nucleotide-binding protein G(I)/G(S)/G(O) subunit gamma-T2 (69 aa).

A disordered region spans residues 47–69 (DPLLKGIPEDKNPFKEKGGCMIS). A compositionally biased stretch (basic and acidic residues) spans 53–69 (IPEDKNPFKEKGGCMIS). Cys66 is modified (cysteine methyl ester). Cys66 is lipidated: S-farnesyl cysteine. Positions 67-69 (MIS) are cleaved as a propeptide — removed in mature form.

The protein belongs to the G protein gamma family. In terms of assembly, g proteins are composed of 3 units, alpha, beta and gamma.

Its subcellular location is the cell membrane. Its function is as follows. Guanine nucleotide-binding proteins (G proteins) are involved as a modulator or transducer in various transmembrane signaling systems. The beta and gamma chains are required for the GTPase activity, for replacement of GDP by GTP, and for G protein-effector interaction. The protein is Guanine nucleotide-binding protein G(I)/G(S)/G(O) subunit gamma-T2 (GNGT2) of Canis lupus familiaris (Dog).